The sequence spans 216 residues: Probable GH family 25 lysozyme 5 (216 aa).

Positions 1-20 (MRFIISLLFVFTLIFNLAFS) are cleaved as a signal peptide. Residues 21–216 (HIGIDVSSGT…GLGIDKNYWE (196 aa)) enclose the Ch-type lysozyme domain. Residue aspartate 25 is part of the active site. Asparagine 31 is a glycosylation site (N-linked (GlcNAc...) asparagine). Catalysis depends on residues aspartate 113 and glutamate 115.

This sequence belongs to the glycosyl hydrolase 25 family.

Its subcellular location is the secreted. The enzyme catalyses Hydrolysis of (1-&gt;4)-beta-linkages between N-acetylmuramic acid and N-acetyl-D-glucosamine residues in a peptidoglycan and between N-acetyl-D-glucosamine residues in chitodextrins.. In Dictyostelium discoideum (Social amoeba), this protein is Probable GH family 25 lysozyme 5.